Here is a 289-residue protein sequence, read N- to C-terminus: Acetyl-coenzyme A carboxylase carboxyl transferase subunit beta (289 aa).

The region spanning 34–289 (MWVKCNKCGE…KLINMHKNSF (256 aa)) is the CoA carboxyltransferase N-terminal domain. Residues cysteine 38, cysteine 41, cysteine 57, and cysteine 60 each contribute to the Zn(2+) site. The C4-type zinc finger occupies 38 to 60 (CNKCGEILYQNDLEKNYMACNLC).

It belongs to the AccD/PCCB family. Acetyl-CoA carboxylase is a heterohexamer composed of biotin carboxyl carrier protein (AccB), biotin carboxylase (AccC) and two subunits each of ACCase subunit alpha (AccA) and ACCase subunit beta (AccD). The cofactor is Zn(2+).

Its subcellular location is the cytoplasm. The catalysed reaction is N(6)-carboxybiotinyl-L-lysyl-[protein] + acetyl-CoA = N(6)-biotinyl-L-lysyl-[protein] + malonyl-CoA. It functions in the pathway lipid metabolism; malonyl-CoA biosynthesis; malonyl-CoA from acetyl-CoA: step 1/1. Its function is as follows. Component of the acetyl coenzyme A carboxylase (ACC) complex. Biotin carboxylase (BC) catalyzes the carboxylation of biotin on its carrier protein (BCCP) and then the CO(2) group is transferred by the transcarboxylase to acetyl-CoA to form malonyl-CoA. This Clostridium botulinum (strain Loch Maree / Type A3) protein is Acetyl-coenzyme A carboxylase carboxyl transferase subunit beta.